Consider the following 328-residue polypeptide: MASSTSTTTSKEIDRELPPLLRVYKDGTVERFLGSSFVPPSPEDPETGVSTKDIVISENPTISARVYLPKLNNTTEKLPILVYYHGGAFCLESAFSFLHQRYLNIVASKANVLVVSIEYRLAPEHPLPAAYEDGWYALKWVTSHSTNNNKPTNADPWLIKHGDFNRFYIGGDTSGANIAHNAALRVGAEALPGGLRIAGVLSAFPLFWGSKPVLSEPVEGHEKSSPMQVWNFVYPDAPGGIDNPLINPLAPGAPNLATLGCPKMLVFVAGKDDLRDRGIWYYEAVKESGWKGDVELAQYEGEEHCFQIYHPETENSKDLIGRIASFLV.

Positions 85–87 (HGG) match the Involved in the stabilization of the negatively charged intermediate by the formation of the oxyanion hole motif. Active-site residues include T173, D272, and H304.

It belongs to the 'GDXG' lipolytic enzyme family.

The enzyme catalyses (2R,3S)-2,4',7-trihydroxyisoflavanone = daidzein + H2O + H(+). It catalyses the reaction 2-hydroxy-2,3-dihydrogenistein = genistein + H2O + H(+). The catalysed reaction is a carboxylic ester + H2O = an alcohol + a carboxylate + H(+). It functions in the pathway secondary metabolite biosynthesis; flavonoid biosynthesis. In terms of biological role, dehydratase that mediates the biosynthesis of isoflavonoids. Can better use 2,7-dihydroxy-4'-methoxyisoflavanone as substrate. Has also a slight carboxylesterase activity toward p-nitrophenyl butyrate. The chain is 2-hydroxyisoflavanone dehydratase (HIDM) from Glycyrrhiza echinata (Licorice).